A 329-amino-acid chain; its full sequence is Very long chain fatty acid elongase 7 (329 aa).

The next 7 membrane-spanning stretches (helical) occupy residues 26 to 46, 66 to 86, 114 to 134, 146 to 166, 170 to 190, 205 to 225, and 233 to 253; these read YPLM…AYIV, LIVY…ESCI, GCWW…FFVM, VIHH…TPGG, FFGF…MLAA, LTVM…QLFF, and IGFA…FSNF.

Belongs to the ELO family.

It localises to the membrane. The enzyme catalyses a very-long-chain acyl-CoA + malonyl-CoA + H(+) = a very-long-chain 3-oxoacyl-CoA + CO2 + CoA. In terms of biological role, catalyzes the first and rate-limiting reaction of the four reactions that constitute the long-chain fatty acids elongation cycle. This endoplasmic reticulum-bound enzymatic process allows the addition of 2 carbons to the chain of long- and very long-chain fatty acids (VLCFAs) per cycle. The polypeptide is Very long chain fatty acid elongase 7 (Drosophila melanogaster (Fruit fly)).